Consider the following 367-residue polypeptide: Acryloyl-CoA reductase electron transfer subunit beta (367 aa).

305 to 333 provides a ligand contact to FAD; sequence VYVALGISGAIQHKAGMQDSELIIAVNKD.

In terms of assembly, heterohexadecamer; tetramer of tetramers. Each tetramer is composed of 2 alpha (AcrC), a beta (AcrA) and a gamma (AcrB) subunit.

It is found in the cytoplasm. Part of the ETF-acryloyl-CoA reductase complex involved in the pathway of L-alanine fermentation. The electron transfer flavoprotein (ETF) serves as a specific electron acceptor for acryloyl-CoA reductase. This is Acryloyl-CoA reductase electron transfer subunit beta (acrA) from Anaerotignum propionicum (Clostridium propionicum).